A 204-amino-acid polypeptide reads, in one-letter code: MTAATTSQPAFSPDQVSVIFVLGGPGAGKGTQCEKLVKDYSFVHLSAGDLLRAEQGRAGSQYGELIKNCIKEGQIVPQEITLALLRNAISDNVKANKHKFLIDGFPRKMDQAISFERDIVESKFILFFDCPEDIMLERLLERGKTSGRSDDNIESIKKRFNTFKETSMPVIEYFETKSKVVRVRCDRSVEDVYKDVQDAIRDSL.

ATP is bound at residue 26–31 (GAGKGT). Positions 46–76 (SAGDLLRAEQGRAGSQYGELIKNCIKEGQIV) are NMP. Residues R52, 74-76 (QIV), 104-107 (GFPR), and Q111 contribute to the a ribonucleoside 5'-phosphate site. Positions 141–151 (ERGKTSGRSDD) are LID. Residue R142 coordinates ATP. Residues R148 and R159 each coordinate a ribonucleoside 5'-phosphate. R187 is a binding site for ATP.

The protein belongs to the adenylate kinase family. UMP-CMP kinase subfamily. Monomer. Mg(2+) serves as cofactor.

Its subcellular location is the cytoplasm. It localises to the nucleus. It carries out the reaction UMP + ATP = UDP + ADP. Catalyzes the phosphorylation of pyrimidine nucleoside monophosphates at the expense of ATP. Plays an important role in de novo pyrimidine nucleotide biosynthesis. Has preference for UMP and dUMP as phosphate acceptors, but can also use CMP, dCMP, AMP, GMP, dGMP and dTMP. ATP and dATP are the best phosphate donors, but can also use GTP, dGTP, dCTP, and dTTP to some degree. This is Uridylate kinase from Saccharomyces cerevisiae (strain ATCC 204508 / S288c) (Baker's yeast).